Consider the following 98-residue polypeptide: NADH-ubiquinone oxidoreductase chain 4L (98 aa).

The next 3 membrane-spanning stretches (helical) occupy residues 1–21, 29–49, and 61–81; these read MPLI…GMLI, SLLC…LMAL, and VVLL…LVSI.

Belongs to the complex I subunit 4L family. As to quaternary structure, core subunit of respiratory chain NADH dehydrogenase (Complex I) which is composed of 45 different subunits.

The protein resides in the mitochondrion inner membrane. The enzyme catalyses a ubiquinone + NADH + 5 H(+)(in) = a ubiquinol + NAD(+) + 4 H(+)(out). Functionally, core subunit of the mitochondrial membrane respiratory chain NADH dehydrogenase (Complex I) which catalyzes electron transfer from NADH through the respiratory chain, using ubiquinone as an electron acceptor. Part of the enzyme membrane arm which is embedded in the lipid bilayer and involved in proton translocation. The protein is NADH-ubiquinone oxidoreductase chain 4L (MT-ND4L) of Hylobates lar (Lar gibbon).